The chain runs to 252 residues: MMIYRLNALTDNYIFLLHDPQTGTAAVVDPAEPEPVLAKLAELGATLRAIFNTHHHWDHVGANCALRSRFPDIAVYGSSEDQGRIPEQTVFLKAGDRVPFGQTYFDVLFVPGHTRGHIAYYAPTTGDLFCGDTLFGGGCGRLFEGSPAQMLDSLNQLRQLPEETRVWCAHEYTQKNLSFALTVEADNPTLQERYAQVCRDRAQGKATIPSTIGLEKATNPFLRCEVRSIQIAVGATTPLQTFTRLRGKRDQY.

Zn(2+)-binding residues include histidine 54, histidine 56, aspartate 58, histidine 59, histidine 113, aspartate 132, and histidine 170.

This sequence belongs to the metallo-beta-lactamase superfamily. Glyoxalase II family. As to quaternary structure, monomer. Requires Zn(2+) as cofactor.

The enzyme catalyses an S-(2-hydroxyacyl)glutathione + H2O = a 2-hydroxy carboxylate + glutathione + H(+). The protein operates within secondary metabolite metabolism; methylglyoxal degradation; (R)-lactate from methylglyoxal: step 2/2. In terms of biological role, thiolesterase that catalyzes the hydrolysis of S-D-lactoyl-glutathione to form glutathione and D-lactic acid. The protein is Hydroxyacylglutathione hydrolase of Thermosynechococcus vestitus (strain NIES-2133 / IAM M-273 / BP-1).